We begin with the raw amino-acid sequence, 634 residues long: MSDSFYRYDVIVIGGGHAGTEAALAAARAGARTLLLTHNIETVGAMSCNPAIGGIGKGHLVKEIDALGGAMAKAADLAGIQWRTLNASKGPAVRATRCQADRNLYRSAIRRIVEAQPNLTVFQAAVDDLIIHNGAAEGDSVRGVITQTGLRFEATAVVLTAGTFLAGKIHVGETQYAAGRMGDPPATTLAARLRERPFAIDRLKTGTPPRIDGRTLDYTMMDEQPGDDPLPVMSFMGQVSDHPTQVSCWITHTTEQTHDIIRGALHRSPLYSGQIEGIGPRYCPSIEDKVVRFADKTSHQIFVEPEGLDVTEIYPNGISTSLPFDVQLALVRSIRGFAQAHITRPGYAIEYDFFDPRGLKASLETKAVGGLFFAGQINGTTGYEEAAAQGLLAGLNAARHVQALPAWSPRRDEAYLGVLVDDLITHGTTEPYRMFTSRAEYRLQLREDNADLRLTGVGRAMGLVDDARWARFSSKQEAVQRETARLSALWATPGNALGREVVDTLGVPMSRETNVLDLIKRPELSYAALMRVPTLGPGVDDAQVAEQVEIGVKYAGYLDRQRDEIARQQRHETTPIPEGFDYAGVRGLSMEVQQKLERVRPQSIGQAQRIPGMTPAAISLLLVHLERARRSQVA.

Residue glycine 14 to glycine 19 participates in FAD binding. Glycine 279 to phenylalanine 293 contributes to the NAD(+) binding site.

The protein belongs to the MnmG family. Homodimer. Heterotetramer of two MnmE and two MnmG subunits. It depends on FAD as a cofactor.

Its subcellular location is the cytoplasm. Its function is as follows. NAD-binding protein involved in the addition of a carboxymethylaminomethyl (cmnm) group at the wobble position (U34) of certain tRNAs, forming tRNA-cmnm(5)s(2)U34. This Xanthomonas campestris pv. campestris (strain B100) protein is tRNA uridine 5-carboxymethylaminomethyl modification enzyme MnmG.